A 240-amino-acid chain; its full sequence is 2,3,4,5-tetrahydropyridine-2,6-dicarboxylate N-acetyltransferase (240 aa).

The protein belongs to the transferase hexapeptide repeat family. DapH subfamily.

It carries out the reaction (S)-2,3,4,5-tetrahydrodipicolinate + acetyl-CoA + H2O = L-2-acetamido-6-oxoheptanedioate + CoA. The protein operates within amino-acid biosynthesis; L-lysine biosynthesis via DAP pathway; LL-2,6-diaminopimelate from (S)-tetrahydrodipicolinate (acetylase route): step 1/3. Its function is as follows. Catalyzes the transfer of an acetyl group from acetyl-CoA to tetrahydrodipicolinate. This is 2,3,4,5-tetrahydropyridine-2,6-dicarboxylate N-acetyltransferase from Staphylococcus epidermidis (strain ATCC 12228 / FDA PCI 1200).